The chain runs to 394 residues: Dual specificity protein phosphatase 4 (394 aa).

At V2 the chain carries N-acetylvaline. Positions 41–159 constitute a Rhodanese domain; the sequence is SGGKCLLLDC…FSSEYPEFCS (119 aa). The Tyrosine-protein phosphatase domain occupies 195 to 336; sequence GPVEILPFLY…LLQFESQVLA (142 aa). C280 serves as the catalytic Phosphocysteine intermediate. Phosphoserine; by MAPK is present on residues S386 and S391.

This sequence belongs to the protein-tyrosine phosphatase family. Non-receptor class dual specificity subfamily. Hollow spherical complex composed of 24 subunits with pseudooctahedral symmetry, has a tetramer as the basic unit. Post-translationally, phosphorylation in the C-terminus by ERK1/2 inhibits proteasomal degradation and stabilizes the protein.

Its subcellular location is the nucleus. It carries out the reaction O-phospho-L-tyrosyl-[protein] + H2O = L-tyrosyl-[protein] + phosphate. It catalyses the reaction O-phospho-L-seryl-[protein] + H2O = L-seryl-[protein] + phosphate. The enzyme catalyses O-phospho-L-threonyl-[protein] + H2O = L-threonyl-[protein] + phosphate. In terms of biological role, regulates mitogenic signal transduction by dephosphorylating both Thr and Tyr residues on MAP kinases ERK1 and ERK2. This is Dual specificity protein phosphatase 4 (DUSP4) from Homo sapiens (Human).